Reading from the N-terminus, the 226-residue chain is Ribose-5-phosphate isomerase A (226 aa).

Residues 33 to 36 (TGST), 86 to 89 (DGAD), and 99 to 102 (KGGG) each bind substrate. The active-site Proton acceptor is the Glu108. Lys126 lines the substrate pocket.

It belongs to the ribose 5-phosphate isomerase family. As to quaternary structure, homodimer.

It carries out the reaction aldehydo-D-ribose 5-phosphate = D-ribulose 5-phosphate. It participates in carbohydrate degradation; pentose phosphate pathway; D-ribose 5-phosphate from D-ribulose 5-phosphate (non-oxidative stage): step 1/1. Its function is as follows. Catalyzes the reversible conversion of ribose-5-phosphate to ribulose 5-phosphate. The chain is Ribose-5-phosphate isomerase A from Bordetella pertussis (strain Tohama I / ATCC BAA-589 / NCTC 13251).